Reading from the N-terminus, the 224-residue chain is Large ribosomal subunit protein uL11c (224 aa).

The N-terminal 66 residues, 1–66 (MAQPLVAAPS…SHRRLSIVAM (66 aa)), are a transit peptide targeting the chloroplast. N6,N6,N6-trimethyllysine is present on residues lysine 75 and lysine 111.

As to quaternary structure, component of the chloroplast large ribosomal subunit (LSU). Mature 70S chloroplast ribosomes of higher plants consist of a small (30S) and a large (50S) subunit. The 30S small subunit contains 1 molecule of ribosomal RNA (16S rRNA) and 24 different proteins. The 50S large subunit contains 3 rRNA molecules (23S, 5S and 4.5S rRNA) and 33 different proteins.

The protein localises to the plastid. The protein resides in the chloroplast. Functionally, component of the chloroplast ribosome (chloro-ribosome), a dedicated translation machinery responsible for the synthesis of chloroplast genome-encoded proteins, including proteins of the transcription and translation machinery and components of the photosynthetic apparatus. This is Large ribosomal subunit protein uL11c (rpl11) from Spinacia oleracea (Spinach).